A 338-amino-acid chain; its full sequence is Anthranilate phosphoribosyltransferase (338 aa).

5-phospho-alpha-D-ribose 1-diphosphate contacts are provided by residues Gly-78, 81–82 (GD), Ser-86, 88–91 (NIST), 106–114 (KHGNRSITS), and Ser-118. Position 78 (Gly-78) interacts with anthranilate. Ser-90 contacts Mg(2+). Position 109 (Asn-109) interacts with anthranilate. Arg-163 is a binding site for anthranilate. Asp-222 and Glu-223 together coordinate Mg(2+).

The protein belongs to the anthranilate phosphoribosyltransferase family. Homodimer. It depends on Mg(2+) as a cofactor.

It catalyses the reaction N-(5-phospho-beta-D-ribosyl)anthranilate + diphosphate = 5-phospho-alpha-D-ribose 1-diphosphate + anthranilate. Its pathway is amino-acid biosynthesis; L-tryptophan biosynthesis; L-tryptophan from chorismate: step 2/5. In terms of biological role, catalyzes the transfer of the phosphoribosyl group of 5-phosphorylribose-1-pyrophosphate (PRPP) to anthranilate to yield N-(5'-phosphoribosyl)-anthranilate (PRA). This Staphylococcus haemolyticus (strain JCSC1435) protein is Anthranilate phosphoribosyltransferase.